We begin with the raw amino-acid sequence, 146 residues long: Anti-sigma F factor (146 aa).

This sequence belongs to the anti-sigma-factor family.

It catalyses the reaction L-seryl-[protein] + ATP = O-phospho-L-seryl-[protein] + ADP + H(+). The enzyme catalyses L-threonyl-[protein] + ATP = O-phospho-L-threonyl-[protein] + ADP + H(+). Its function is as follows. Binds to sigma F and blocks its ability to form an RNA polymerase holoenzyme (E-sigma F). Phosphorylates SpoIIAA on a serine residue. This phosphorylation may enable SpoIIAA to act as an anti-anti-sigma factor that counteracts SpoIIAB and thus releases sigma F from inhibition. In Halalkalibacterium halodurans (strain ATCC BAA-125 / DSM 18197 / FERM 7344 / JCM 9153 / C-125) (Bacillus halodurans), this protein is Anti-sigma F factor.